A 91-amino-acid polypeptide reads, in one-letter code: Alpha-defensin-related sequence 12 (91 aa).

Residues 1-19 (MKKLVLLSAFVLLAFQVQA) form the signal peptide. A propeptide spanning residues 20–65 (DSIQNTDEEIKTEEQPGEENQAVSISFGDPEGYALQDAAIRRARRC) is cleaved from the precursor. Repeat copies occupy residues 65–67 (CPP), 68–70 (CPS), 71–73 (CLS), 74–76 (CPW), 77–79 (CPR), and 83–85 (CPM). Residues 65-88 (CPPCPSCLSCPWCPRCLRCPMCKC) form a 6 X 3 AA tandem repeats of C-P-X region.

It belongs to the alpha-defensin family. In terms of tissue distribution, paneth cells of the small bowel.

The protein localises to the secreted. In terms of biological role, apparent precursor of a secreted, cationic, proline- and cysteine-rich peptide that contains Cys-Pro-Xaa repeats. Unlike cryptdin, the proposed mature peptide region lacks the structural motif characteristic of defensins. It may have microbicidal activities. The protein is Alpha-defensin-related sequence 12 (Defa-rs12) of Mus musculus (Mouse).